The primary structure comprises 282 residues: Pantothenate synthetase (282 aa).

30–37 (MGYLHEGH) contacts ATP. Residue histidine 37 is the Proton donor of the active site. Glutamine 61 contacts (R)-pantoate. A beta-alanine-binding site is contributed by glutamine 61. 147-150 (GMKD) contributes to the ATP binding site. Glutamine 153 serves as a coordination point for (R)-pantoate. Residues valine 176 and 184–187 (KSSR) each bind ATP.

The protein belongs to the pantothenate synthetase family. In terms of assembly, homodimer.

Its subcellular location is the cytoplasm. The enzyme catalyses (R)-pantoate + beta-alanine + ATP = (R)-pantothenate + AMP + diphosphate + H(+). It functions in the pathway cofactor biosynthesis; (R)-pantothenate biosynthesis; (R)-pantothenate from (R)-pantoate and beta-alanine: step 1/1. Functionally, catalyzes the condensation of pantoate with beta-alanine in an ATP-dependent reaction via a pantoyl-adenylate intermediate. The protein is Pantothenate synthetase of Bacillus thuringiensis (strain Al Hakam).